We begin with the raw amino-acid sequence, 44 residues long: Large ribosomal subunit protein bL34 (44 aa).

The segment at Met1–Asp26 is disordered. Over residues Asn9–Met22 the composition is skewed to basic residues.

Belongs to the bacterial ribosomal protein bL34 family.

The sequence is that of Large ribosomal subunit protein bL34 from Trichormus variabilis (strain ATCC 29413 / PCC 7937) (Anabaena variabilis).